The following is a 382-amino-acid chain: Cysteine desulfurase IscS 1 (382 aa).

Pyridoxal 5'-phosphate is bound at residue Asn-149. The active-site Cysteine persulfide intermediate is Cys-321. Residue Cys-321 participates in [2Fe-2S] cluster binding.

It belongs to the class-V pyridoxal-phosphate-dependent aminotransferase family. NifS/IscS subfamily. In terms of assembly, homodimer. Forms a heterotetramer with IscU, interacts with other sulfur acceptors. Pyridoxal 5'-phosphate serves as cofactor.

Its subcellular location is the cytoplasm. The catalysed reaction is (sulfur carrier)-H + L-cysteine = (sulfur carrier)-SH + L-alanine. It participates in cofactor biosynthesis; iron-sulfur cluster biosynthesis. Functionally, master enzyme that delivers sulfur to a number of partners involved in Fe-S cluster assembly, tRNA modification or cofactor biosynthesis. Catalyzes the removal of elemental sulfur atoms from cysteine to produce alanine. Functions as a sulfur delivery protein for Fe-S cluster synthesis onto IscU, an Fe-S scaffold assembly protein, as well as other S acceptor proteins. In Archaeoglobus fulgidus (strain ATCC 49558 / DSM 4304 / JCM 9628 / NBRC 100126 / VC-16), this protein is Cysteine desulfurase IscS 1.